Reading from the N-terminus, the 272-residue chain is Tryptophan synthase alpha chain (272 aa).

Residues E49 and E60 each act as proton acceptor in the active site.

The protein belongs to the TrpA family. Tetramer of two alpha and two beta chains.

It catalyses the reaction (1S,2R)-1-C-(indol-3-yl)glycerol 3-phosphate + L-serine = D-glyceraldehyde 3-phosphate + L-tryptophan + H2O. It functions in the pathway amino-acid biosynthesis; L-tryptophan biosynthesis; L-tryptophan from chorismate: step 5/5. Functionally, the alpha subunit is responsible for the aldol cleavage of indoleglycerol phosphate to indole and glyceraldehyde 3-phosphate. This Legionella pneumophila (strain Corby) protein is Tryptophan synthase alpha chain.